Reading from the N-terminus, the 475-residue chain is Aspartyl/glutamyl-tRNA(Asn/Gln) amidotransferase subunit B (475 aa).

The protein belongs to the GatB/GatE family. GatB subfamily. Heterotrimer of A, B and C subunits.

The enzyme catalyses L-glutamyl-tRNA(Gln) + L-glutamine + ATP + H2O = L-glutaminyl-tRNA(Gln) + L-glutamate + ADP + phosphate + H(+). It carries out the reaction L-aspartyl-tRNA(Asn) + L-glutamine + ATP + H2O = L-asparaginyl-tRNA(Asn) + L-glutamate + ADP + phosphate + 2 H(+). Its function is as follows. Allows the formation of correctly charged Asn-tRNA(Asn) or Gln-tRNA(Gln) through the transamidation of misacylated Asp-tRNA(Asn) or Glu-tRNA(Gln) in organisms which lack either or both of asparaginyl-tRNA or glutaminyl-tRNA synthetases. The reaction takes place in the presence of glutamine and ATP through an activated phospho-Asp-tRNA(Asn) or phospho-Glu-tRNA(Gln). In Thermoanaerobacter pseudethanolicus (strain ATCC 33223 / 39E) (Clostridium thermohydrosulfuricum), this protein is Aspartyl/glutamyl-tRNA(Asn/Gln) amidotransferase subunit B.